We begin with the raw amino-acid sequence, 686 residues long: DNA ligase (686 aa).

Residues 33–37 (DSVYD), 82–83 (SL), and E122 each bind NAD(+). Catalysis depends on K124, which acts as the N6-AMP-lysine intermediate. Positions 145, 182, 300, and 324 each coordinate NAD(+). Positions 418, 421, 436, and 441 each coordinate Zn(2+). The BRCT domain maps to 600–686 (AVSQILAGKK…PTVESGDLHP (87 aa)).

Belongs to the NAD-dependent DNA ligase family. LigA subfamily. Requires Mg(2+) as cofactor. The cofactor is Mn(2+).

The enzyme catalyses NAD(+) + (deoxyribonucleotide)n-3'-hydroxyl + 5'-phospho-(deoxyribonucleotide)m = (deoxyribonucleotide)n+m + AMP + beta-nicotinamide D-nucleotide.. DNA ligase that catalyzes the formation of phosphodiester linkages between 5'-phosphoryl and 3'-hydroxyl groups in double-stranded DNA using NAD as a coenzyme and as the energy source for the reaction. It is essential for DNA replication and repair of damaged DNA. The polypeptide is DNA ligase (Synechococcus sp. (strain JA-2-3B'a(2-13)) (Cyanobacteria bacterium Yellowstone B-Prime)).